Here is a 420-residue protein sequence, read N- to C-terminus: MTITPPALSVFETLESEVRSYCRGWPAVFDRAQGARLTDEDGHSYLDFFAGAGSLNYGHNNPVLKRALIDYIERDGITHGLDMATTAKRAFLETFQNVILRPRDLPYKVMFPGPTGTNAVESALKLARKVKGRESVVSFTNAFHGMSLGSLAVTGNAFKRAGAGIPLVHGTPMPFDNYFDGTVPDFLWFERLLEDQGSGLNKPAAVIVETVQGEGGINVARAEWLRALQELCLRQVMLLIVDDIQMGCGRTGGFFSFEEAGIVPDIVTLSKSISGYGLPMSLCLFKPELDIWEPGEHNGTFRGNNPAFVTAAAVLDAYWADGQMEKQTLARGEQVEQTLLAICAEEPTAQFRGRGLVWGMEFEDKARASAVCARAFELGLLLETSGPQSEVVKLLPPLTITPEELDEGLRTLARCVRETA.

Lysine 271 carries the post-translational modification N6-(pyridoxal phosphate)lysine.

This sequence belongs to the class-III pyridoxal-phosphate-dependent aminotransferase family. Requires pyridoxal 5'-phosphate as cofactor.

It catalyses the reaction L-2,4-diaminobutanoate + 2-oxoglutarate = L-aspartate 4-semialdehyde + L-glutamate. Its pathway is amine and polyamine biosynthesis; ectoine biosynthesis; L-ectoine from L-aspartate 4-semialdehyde: step 1/3. Functionally, catalyzes reversively the conversion of L-aspartate beta-semialdehyde (ASA) to L-2,4-diaminobutyrate (DABA) by transamination with L-glutamate. The polypeptide is Diaminobutyrate--2-oxoglutarate transaminase (ectB) (Streptomyces anulatus (Streptomyces chrysomallus)).